Reading from the N-terminus, the 94-residue chain is Large ribosomal subunit protein bL27 (94 aa).

The propeptide occupies 1-9 (MLRLDLQFF).

Belongs to the bacterial ribosomal protein bL27 family. As to quaternary structure, part of the 50S ribosomal subunit. The N-terminus is cleaved by ribosomal processing cysteine protease Prp.

Plays a role in sporulation at high temperatures. The sequence is that of Large ribosomal subunit protein bL27 (rpmA) from Bacillus subtilis (strain 168).